The primary structure comprises 47 residues: ATP-dependent zinc metalloprotease FTSH, chloroplastic (47 aa).

The protein in the N-terminal section; belongs to the AAA ATPase family. This sequence in the C-terminal section; belongs to the peptidase M41 family. Zn(2+) is required as a cofactor.

Its subcellular location is the plastid. The protein resides in the chloroplast membrane. In terms of biological role, seems to act as an ATP-dependent zinc metallopeptidase. This is ATP-dependent zinc metalloprotease FTSH, chloroplastic from Populus euphratica (Euphrates poplar).